Reading from the N-terminus, the 179-residue chain is Pyridoxal 5'-phosphate synthase subunit PdxT (179 aa).

An L-glutamine-binding site is contributed by 48–50 (GES). C79 acts as the Nucleophile in catalysis. L-glutamine is bound by residues R101 and 127-128 (IR). Active-site charge relay system residues include H163 and E165.

The protein belongs to the glutaminase PdxT/SNO family. In the presence of PdxS, forms a dodecamer of heterodimers. Only shows activity in the heterodimer.

The enzyme catalyses aldehydo-D-ribose 5-phosphate + D-glyceraldehyde 3-phosphate + L-glutamine = pyridoxal 5'-phosphate + L-glutamate + phosphate + 3 H2O + H(+). It carries out the reaction L-glutamine + H2O = L-glutamate + NH4(+). Its pathway is cofactor biosynthesis; pyridoxal 5'-phosphate biosynthesis. Catalyzes the hydrolysis of glutamine to glutamate and ammonia as part of the biosynthesis of pyridoxal 5'-phosphate. The resulting ammonia molecule is channeled to the active site of PdxS. This is Pyridoxal 5'-phosphate synthase subunit PdxT from Francisella tularensis subsp. holarctica (strain FTNF002-00 / FTA).